Consider the following 105-residue polypeptide: MYAVFQTGSKQYRVVEGQVIHIERIDLEVGNQVEFNQILLIDSNECLHIGSPFIKKGRIIAEIIAQSLNQKIKIIKFRRRKHFRKFQGHRQCFTTIKIVSIKHKH.

This sequence belongs to the bacterial ribosomal protein bL21 family. As to quaternary structure, part of the 50S ribosomal subunit. Contacts protein L20.

In terms of biological role, this protein binds to 23S rRNA in the presence of protein L20. The chain is Large ribosomal subunit protein bL21 from Blochmanniella pennsylvanica (strain BPEN).